Here is a 316-residue protein sequence, read N- to C-terminus: Transaldolase (316 aa).

Catalysis depends on K132, which acts as the Schiff-base intermediate with substrate.

Belongs to the transaldolase family. Type 1 subfamily. In terms of assembly, homodimer.

Its subcellular location is the cytoplasm. The enzyme catalyses D-sedoheptulose 7-phosphate + D-glyceraldehyde 3-phosphate = D-erythrose 4-phosphate + beta-D-fructose 6-phosphate. It functions in the pathway carbohydrate degradation; pentose phosphate pathway; D-glyceraldehyde 3-phosphate and beta-D-fructose 6-phosphate from D-ribose 5-phosphate and D-xylulose 5-phosphate (non-oxidative stage): step 2/3. In terms of biological role, transaldolase is important for the balance of metabolites in the pentose-phosphate pathway. The polypeptide is Transaldolase (Methylobacillus flagellatus (strain ATCC 51484 / DSM 6875 / VKM B-1610 / KT)).